Consider the following 741-residue polypeptide: Protein O-mannosyl-transferase TMTC4 (741 aa).

The Cytoplasmic portion of the chain corresponds to 1 to 10 (MVELDADLDH). A helical transmembrane segment spans residues 11–31 (IVPSVLPPFWAKLVVGFVSLL). Over 32-110 (CFARSYDGDF…FHPVGFHVVN (79 aa)) the chain is Extracellular. Asn-77 is a glycosylation site (N-linked (GlcNAc...) asparagine). A helical transmembrane segment spans residues 111–131 (ILLHGSISILMLDVFSVLFGG). Residues 132–146 (LQYTGKGQRVHLAPR) lie on the Cytoplasmic side of the membrane. The next 2 helical transmembrane spans lie at 147-166 (ASLL…ECVA) and 167-185 (GVVG…LSFL). Residues 186–198 (GYCQAFKETGNKE) lie on the Cytoplasmic side of the membrane. Residues 199-219 (GTHSSTFWVLLSIFLGAVAML) form a helical membrane-spanning segment. Topologically, residues 220 to 224 (CKEQG) are extracellular. Residues 225 to 245 (ITVLGLNAVFDILVIGKLDIL) traverse the membrane as a helical segment. The Cytoplasmic portion of the chain corresponds to 246 to 265 (AAVRKVLHKDKSQENAGMFK). The helical transmembrane segment at 266–286 (NGGLLFRIALLTIGGTSMLYI) threads the bilayer. The Extracellular segment spans residues 287–354 (RWKIMGTGPP…PLIKSVGDWR (68 aa)). A helical transmembrane segment spans residues 355 to 375 (VIALAALWLCLIGLIFQALCS). Residues 376 to 382 (EDSCKRR) are Cytoplasmic-facing. A helical transmembrane segment spans residues 383 to 403 (ILTLGLGFLVIPFLPASNLFF). Residues 404–412 (RVGFVVAER) lie on the Extracellular side of the membrane. A helical membrane pass occupies residues 413–433 (VLYLPSAGYCVLLTFGFGALS). The Cytoplasmic portion of the chain corresponds to 434 to 441 (RHTKKKKP). The helical transmembrane segment at 442–462 (VAAIILGILLINALRCVIRSG) threads the bilayer. Residues 463-741 (EWRSEEQLFR…KLEQTQKKDV (279 aa)) lie on the Extracellular side of the membrane. TPR repeat units lie at residues 482 to 515 (AKVH…NPKY), 516 to 549 (VHAM…QPDF), 550 to 583 (AAAW…RRKY), 584 to 617 (PDCY…KPEH), 618 to 651 (SLAW…IPND), 652 to 685 (HSLM…NPNV), and 686 to 719 (ASYH…DPVA). A glycan (N-linked (GlcNAc...) asparagine) is linked at Asn-497. The N-linked (GlcNAc...) asparagine glycan is linked to Asn-609. N-linked (GlcNAc...) asparagine glycosylation occurs at Asn-725.

This sequence belongs to the TMTC family.

The protein localises to the membrane. Its subcellular location is the endoplasmic reticulum. It carries out the reaction a di-trans,poly-cis-dolichyl beta-D-mannosyl phosphate + L-seryl-[protein] = 3-O-(alpha-D-mannosyl)-L-seryl-[protein] + a di-trans,poly-cis-dolichyl phosphate + H(+). The catalysed reaction is a di-trans,poly-cis-dolichyl beta-D-mannosyl phosphate + L-threonyl-[protein] = 3-O-(alpha-D-mannosyl)-L-threonyl-[protein] + a di-trans,poly-cis-dolichyl phosphate + H(+). It participates in protein modification; protein glycosylation. Its function is as follows. Transfers mannosyl residues to the hydroxyl group of serine or threonine residues. The 4 members of the TMTC family are O-mannosyl-transferases dedicated primarily to the cadherin superfamily, each member seems to have a distinct role in decorating the cadherin domains with O-linked mannose glycans at specific regions. Also acts as O-mannosyl-transferase on other proteins such as PDIA3. The protein is Protein O-mannosyl-transferase TMTC4 of Mus musculus (Mouse).